Consider the following 255-residue polypeptide: Transcription factor CAULIFLOWER (255 aa).

Positions 1-61 (MGRGRVELKR…GKLFEYSSES (61 aa)) constitute an MADS-box domain. Residues 90-180 (QTNWSMEYSR…TKQIKERENI (91 aa)) enclose the K-box domain. Residues 90 to 198 (QTNWSMEYSR…EQLNRSVDDV (109 aa)) are a coiled coil.

As to quaternary structure, homodimer capable of binding to CArG-box sequences. As to expression, expressed in young flower primordia.

Its subcellular location is the nucleus. Probable transcription factor that promotes early floral meristem identity in synergy with APETALA1, FRUITFULL and LEAFY. Is required subsequently for the transition of an inflorescence meristem into a floral meristem. Seems to be partially redundant to the function of APETALA1. Positively regulates the APETALA1 and LEAFY expression. This is Transcription factor CAULIFLOWER (CAL) from Arabidopsis thaliana (Mouse-ear cress).